We begin with the raw amino-acid sequence, 259 residues long: Small ribosomal subunit protein eS1 (259 aa).

Residues M1–K18 are compositionally biased toward basic residues. The segment at M1 to D22 is disordered.

This sequence belongs to the eukaryotic ribosomal protein eS1 family. Component of the small ribosomal subunit. Mature ribosomes consist of a small (40S) and a large (60S) subunit. The 40S subunit contains about 33 different proteins and 1 molecule of RNA (18S). The 60S subunit contains about 49 different proteins and 3 molecules of RNA (25S, 5.8S and 5S).

Its subcellular location is the cytoplasm. The sequence is that of Small ribosomal subunit protein eS1 from Chlamydomonas reinhardtii (Chlamydomonas smithii).